The primary structure comprises 469 residues: Relaxin-3 receptor 1 (469 aa).

Topologically, residues 1-81 (MQMADAATIA…ESADTEARVR (81 aa)) are extracellular. N-linked (GlcNAc...) asparagine glycans are attached at residues N36 and N40. Residues 82–102 (ILISVVYWVVCALGLAGNLLV) traverse the membrane as a helical segment. Over 103 to 119 (LYLMKSMQGWRKSSINL) the chain is Cytoplasmic. Residues 120–140 (FVTNLALTDFQFVLTLPFWAV) traverse the membrane as a helical segment. The Extracellular segment spans residues 141 to 156 (ENALDFKWPFGKAMCK). The cysteines at positions 155 and 247 are disulfide-linked. Residues 157–177 (IVSMVTSMNMYASVFFLTAMS) traverse the membrane as a helical segment. The Cytoplasmic portion of the chain corresponds to 178-215 (VTRYHSVASALKSHRTRGHGRGDCCGRSLGDSCCFSAK). The chain crosses the membrane as a helical span at residues 216 to 236 (ALCVWIWALAALASLPSAIFS). The Extracellular segment spans residues 237 to 270 (TTVKVMGEELCLVRFPDKLLGRDRQFWLGLYHSQ). Residues 271-291 (KVLLGFVLPLGIIILCYLLLV) form a helical membrane-spanning segment. The Cytoplasmic portion of the chain corresponds to 292-329 (RFIADRRAAGTKGGAAVAGGRPTGASARRLSKVTKSVT). Residues 330 to 350 (IVVLSFFLCWLPNQALTTWSI) traverse the membrane as a helical segment. Topologically, residues 351–356 (LIKFNA) are extracellular. A helical membrane pass occupies residues 357–377 (VPFSQEYFLCQVYAFPVSVCL). Topologically, residues 378-469 (AHSNSCLNPV…YDLLPSSSAY (92 aa)) are cytoplasmic.

It belongs to the G-protein coupled receptor 1 family. In terms of tissue distribution, expressed predominantly in brain regions. Highest expression in substantia nigra and pituitary, followed by hippocampus, spinal cord, amygdala, caudate nucleus and corpus callosum, quite low level in cerebellum. In peripheral tissues, relatively high levels in adrenal glands, low levels in pancreas, salivary gland, placenta, mammary gland and testis.

The protein localises to the cell membrane. Its function is as follows. Receptor for RNL3/relaxin-3. Binding of the ligand inhibit cAMP accumulation. This chain is Relaxin-3 receptor 1 (RXFP3), found in Homo sapiens (Human).